Here is a 624-residue protein sequence, read N- to C-terminus: Translocator protein BipB (624 aa).

The tract at residues 54-99 (LASEQCDAQPVTDDARLDRLDDKPALRAPRSDAAHAADGNARGNGG) is disordered. A compositionally biased stretch (basic and acidic residues) spans 66–88 (DDARLDRLDDKPALRAPRSDAAH). The stretch at 313–343 (EMQAKREAELQKKSDEYQEQVKKAEEMQKTM) forms a coiled coil. Transmembrane regions (helical) follow at residues 359–379 (FAAA…GLAL), 405–425 (AILK…LVAC), and 434–454 (LAGA…AAFV).

This sequence belongs to the SctE/SipB/YopB family.

It localises to the secreted. The protein resides in the host membrane. Its function is as follows. Plays a role in the bacterium-induced formation of multinucleated giant cell (MNGC), which is formed after host cell fusion, as well as in the intercellular spreading of bacteria and in the induction of apoptosis in macrophages. May act in concert with other effector proteins to induce fusion of host cell membranes. The chain is Translocator protein BipB (bipB) from Burkholderia thailandensis (strain ATCC 700388 / DSM 13276 / CCUG 48851 / CIP 106301 / E264).